The following is a 233-amino-acid chain: Cytochrome c biogenesis ATP-binding export protein CcmA (233 aa).

The ABC transporter domain occupies 17–233 (FAGEDLLCVR…AAGLFLEDEG (217 aa)). 49 to 56 (GPNGSGKS) is a binding site for ATP.

This sequence belongs to the ABC transporter superfamily. CcmA exporter (TC 3.A.1.107) family. The complex is composed of two ATP-binding proteins (CcmA) and two transmembrane proteins (CcmB).

It localises to the cell inner membrane. It carries out the reaction heme b(in) + ATP + H2O = heme b(out) + ADP + phosphate + H(+). Functionally, part of the ABC transporter complex CcmAB involved in the biogenesis of c-type cytochromes; once thought to export heme, this seems not to be the case, but its exact role is uncertain. Responsible for energy coupling to the transport system. This chain is Cytochrome c biogenesis ATP-binding export protein CcmA, found in Rhodospirillum rubrum (strain ATCC 11170 / ATH 1.1.1 / DSM 467 / LMG 4362 / NCIMB 8255 / S1).